The chain runs to 346 residues: UPF0421 protein OB2406 (346 aa).

4 consecutive transmembrane segments (helical) span residues I16–V36, L55–F75, L102–M122, and L128–P148.

The protein belongs to the UPF0421 family.

Its subcellular location is the cell membrane. The sequence is that of UPF0421 protein OB2406 from Oceanobacillus iheyensis (strain DSM 14371 / CIP 107618 / JCM 11309 / KCTC 3954 / HTE831).